A 419-amino-acid chain; its full sequence is Serine--tRNA ligase (419 aa).

226–228 (TSE) is an L-serine binding site. Residues 257–259 (RRE) and valine 273 contribute to the ATP site. Glutamate 280 contributes to the L-serine binding site. 344–347 (ELTS) serves as a coordination point for ATP. Threonine 379 is an L-serine binding site.

Belongs to the class-II aminoacyl-tRNA synthetase family. Type-1 seryl-tRNA synthetase subfamily. As to quaternary structure, homodimer. The tRNA molecule binds across the dimer.

Its subcellular location is the cytoplasm. It catalyses the reaction tRNA(Ser) + L-serine + ATP = L-seryl-tRNA(Ser) + AMP + diphosphate + H(+). It carries out the reaction tRNA(Sec) + L-serine + ATP = L-seryl-tRNA(Sec) + AMP + diphosphate + H(+). The protein operates within aminoacyl-tRNA biosynthesis; selenocysteinyl-tRNA(Sec) biosynthesis; L-seryl-tRNA(Sec) from L-serine and tRNA(Sec): step 1/1. Functionally, catalyzes the attachment of serine to tRNA(Ser). Is also able to aminoacylate tRNA(Sec) with serine, to form the misacylated tRNA L-seryl-tRNA(Sec), which will be further converted into selenocysteinyl-tRNA(Sec). This is Serine--tRNA ligase from Mycobacterium marinum (strain ATCC BAA-535 / M).